The primary structure comprises 263 residues: Chymotrypsinogen B2 (263 aa).

An N-terminal signal peptide occupies residues 1–18 (MAFLWLLSCWALLGTTFG). Disulfide bonds link Cys19-Cys140, Cys60-Cys76, Cys154-Cys219, Cys186-Cys200, and Cys209-Cys238. The 228-residue stretch at 34–261 (IVNGEDAVPG…LIPWVQKILA (228 aa)) folds into the Peptidase S1 domain. Residues His75 and Asp120 each act as charge relay system in the active site. The Charge relay system role is filled by Ser213.

Belongs to the peptidase S1 family.

It localises to the secreted. Its subcellular location is the extracellular space. It catalyses the reaction Preferential cleavage: Tyr-|-Xaa, Trp-|-Xaa, Phe-|-Xaa, Leu-|-Xaa.. The protein is Chymotrypsinogen B2 (CTRB2) of Homo sapiens (Human).